The sequence spans 269 residues: Ribonuclease HII (269 aa).

In terms of domain architecture, RNase H type-2 spans 79 to 269 (TYLAGADEVG…SFLKNILNTF (191 aa)). A divalent metal cation contacts are provided by D85, E86, and D182.

The protein belongs to the RNase HII family. The cofactor is Mn(2+). It depends on Mg(2+) as a cofactor.

Its subcellular location is the cytoplasm. The catalysed reaction is Endonucleolytic cleavage to 5'-phosphomonoester.. Functionally, endonuclease that specifically degrades the RNA of RNA-DNA hybrids. This is Ribonuclease HII from Clostridium novyi (strain NT).